Consider the following 343-residue polypeptide: MASGTIPVQNEEIIKSQVNTVRIYIDGAYGIGKSLTAKYLVRADENRPGYTYYFPEPMLYWRSLFETDVVGGIYAVQDRKRRGELSAEDAAYITAHYQARFAAPYLLLHSRLSTITGYQKVVCEEHPDVTLIIDRHPLASLVCFPLARYFVGDMTLGSVLSLMATLPREPPGGNLVVTTLNIEEHLKRLRGRSRTGEQIDMKLIHALRNVYMMLVHTKKFLTKNTSWRDGWGKLKIFSHYERNRLVETTIVSDSTESDLCDTLFSVFKARELSDQNGDLLDMHAWVLDGLMETLQNLQIFTLNLEGTPDECAAALGALRQDMDMTFIAACDMHRISEALTIYH.

27 to 34 (GAYGIGKS) provides a ligand contact to ATP. Glutamate 56 functions as the Proton acceptor in the catalytic mechanism. Substrate-binding residues include tyrosine 74 and glutamine 98. Arginine 188 lines the ATP pocket. Arginine 194 is a binding site for substrate.

It belongs to the herpesviridae thymidine kinase family. As to quaternary structure, homodimer.

It carries out the reaction thymidine + ATP = dTMP + ADP + H(+). Its function is as follows. Catalyzes the transfer of the gamma-phospho group of ATP to thymidine to generate dTMP in the salvage pathway of pyrimidine synthesis. The dTMP serves as a substrate for DNA polymerase during viral DNA replication. Allows the virus to be reactivated and to grow in non-proliferative cells lacking a high concentration of phosphorylated nucleic acid precursors. The protein is Thymidine kinase of Felidae (cat family).